The sequence spans 119 residues: Holo-[acyl-carrier-protein] synthase (119 aa).

Positions 8 and 60 each coordinate Mg(2+).

The protein belongs to the P-Pant transferase superfamily. AcpS family. Mg(2+) is required as a cofactor.

It localises to the cytoplasm. The catalysed reaction is apo-[ACP] + CoA = holo-[ACP] + adenosine 3',5'-bisphosphate + H(+). Transfers the 4'-phosphopantetheine moiety from coenzyme A to a Ser of acyl-carrier-protein. In Mycoplasma pneumoniae (strain ATCC 29342 / M129 / Subtype 1) (Mycoplasmoides pneumoniae), this protein is Holo-[acyl-carrier-protein] synthase.